The primary structure comprises 405 residues: Acetate kinase (405 aa).

Mg(2+) is bound at residue asparagine 7. Lysine 14 provides a ligand contact to ATP. Arginine 90 contributes to the substrate binding site. Aspartate 147 (proton donor/acceptor) is an active-site residue. ATP is bound by residues 207-211, 282-284, and 330-334; these read HLGNG, DMR, and GVGEN. Glutamate 383 serves as a coordination point for Mg(2+).

Belongs to the acetokinase family. Homodimer. Mg(2+) is required as a cofactor. Requires Mn(2+) as cofactor.

The protein localises to the cytoplasm. It catalyses the reaction acetate + ATP = acetyl phosphate + ADP. The protein operates within metabolic intermediate biosynthesis; acetyl-CoA biosynthesis; acetyl-CoA from acetate: step 1/2. Functionally, catalyzes the formation of acetyl phosphate from acetate and ATP. Can also catalyze the reverse reaction. The chain is Acetate kinase from Pseudothermotoga lettingae (strain ATCC BAA-301 / DSM 14385 / NBRC 107922 / TMO) (Thermotoga lettingae).